We begin with the raw amino-acid sequence, 186 residues long: Glycerol-3-phosphate acyltransferase 1 (186 aa).

The next 5 membrane-spanning stretches (helical) occupy residues 9 to 29 (MQFL…AYIV), 58 to 78 (GYFV…VSIA), 85 to 105 (STFV…PVLF), 121 to 141 (IAFD…FYLI), and 161 to 181 (ILYS…VLIL).

The protein belongs to the PlsY family. As to quaternary structure, probably interacts with PlsX.

The protein resides in the cell membrane. It carries out the reaction an acyl phosphate + sn-glycerol 3-phosphate = a 1-acyl-sn-glycero-3-phosphate + phosphate. It functions in the pathway lipid metabolism; phospholipid metabolism. Catalyzes the transfer of an acyl group from acyl-phosphate (acyl-PO(4)) to glycerol-3-phosphate (G3P) to form lysophosphatidic acid (LPA). This enzyme utilizes acyl-phosphate as fatty acyl donor, but not acyl-CoA or acyl-ACP. This Bacillus cereus (strain ZK / E33L) protein is Glycerol-3-phosphate acyltransferase 1.